We begin with the raw amino-acid sequence, 335 residues long: F420-dependent glucose-6-phosphate dehydrogenase 1 (335 aa).

Position 38 (D38) interacts with coenzyme F420-(gamma-Glu)n. H39 (proton donor) is an active-site residue. Coenzyme F420-(gamma-Glu)n contacts are provided by residues T75 and 106-107 (TG). Catalysis depends on E108, which acts as the Proton acceptor. Coenzyme F420-(gamma-Glu)n is bound by residues N111, 176-177 (GG), and 179-180 (VV). Residues T194, K197, K258, and R282 each contribute to the substrate site.

The protein belongs to the F420-dependent glucose-6-phosphate dehydrogenase family. Homodimer.

The enzyme catalyses oxidized coenzyme F420-(gamma-L-Glu)(n) + D-glucose 6-phosphate + H(+) = 6-phospho-D-glucono-1,5-lactone + reduced coenzyme F420-(gamma-L-Glu)(n). Catalyzes the coenzyme F420-dependent oxidation of glucose 6-phosphate (G6P) to 6-phosphogluconolactone. This Rhodococcus jostii (strain RHA1) protein is F420-dependent glucose-6-phosphate dehydrogenase 1.